The following is a 165-amino-acid chain: Inorganic pyrophosphatase (165 aa).

Residues Lys-21, Arg-35, and Tyr-47 each contribute to the substrate site. 3 residues coordinate Mg(2+): Asp-57, Asp-62, and Asp-94. Tyr-131 contacts substrate.

It belongs to the PPase family. Homotrimer. In presence of divalent cations the trimers aggregate to form a hexamer. Mg(2+) is required as a cofactor.

The protein localises to the cytoplasm. It carries out the reaction diphosphate + H2O = 2 phosphate + H(+). Its function is as follows. Catalyzes the hydrolysis of inorganic pyrophosphate (PPi) forming two phosphate ions. This Bacillus sp. (strain PS3) protein is Inorganic pyrophosphatase.